We begin with the raw amino-acid sequence, 137 residues long: Small ribosomal subunit protein uS12 (137 aa).

Residues 33–57 (KVQTNVSSPQKRGVATRVGTMTPKK) are disordered. 3-methylthioaspartic acid is present on Asp-102.

This sequence belongs to the universal ribosomal protein uS12 family. Part of the 30S ribosomal subunit. Contacts proteins S8 and S17. May interact with IF1 in the 30S initiation complex.

Functionally, with S4 and S5 plays an important role in translational accuracy. In terms of biological role, interacts with and stabilizes bases of the 16S rRNA that are involved in tRNA selection in the A site and with the mRNA backbone. Located at the interface of the 30S and 50S subunits, it traverses the body of the 30S subunit contacting proteins on the other side and probably holding the rRNA structure together. The combined cluster of proteins S8, S12 and S17 appears to hold together the shoulder and platform of the 30S subunit. This is Small ribosomal subunit protein uS12 from Streptococcus thermophilus (strain CNRZ 1066).